The chain runs to 310 residues: Probable plastid-lipid-associated protein 2, chloroplastic (310 aa).

Residues 1–59 (MATVQLSTQFSCQTRVSISPNSKSISKPPFLVPVTSIIHRPMISTGGIAVSPRRVFKVR) constitute a chloroplast transit peptide. Thr-61 is modified (phosphothreonine). Residues 65–94 (EIGSALLAAEEAIEDVEETERLKRSLVDSL) are a coiled coil.

Belongs to the PAP/fibrillin family.

The protein localises to the plastid. It is found in the chloroplast. It localises to the plastoglobule. Functionally, probably involved in light/cold stress-related jasmonate (JA) biosynthesis. In Arabidopsis thaliana (Mouse-ear cress), this protein is Probable plastid-lipid-associated protein 2, chloroplastic (PAP2).